We begin with the raw amino-acid sequence, 484 residues long: tRNA-2-methylthio-N(6)-dimethylallyladenosine synthase (484 aa).

The 118-residue stretch at 36-153 folds into the MTTase N-terminal domain; the sequence is GKLYIKTHGC…LPELIRARRE (118 aa). Residues Cys-45, Cys-82, Cys-116, Cys-190, Cys-194, and Cys-197 each coordinate [4Fe-4S] cluster. Residues 176–415 enclose the Radical SAM core domain; the sequence is RAEGPSAFVS…HISAHAASIS (240 aa). One can recognise a TRAM domain in the interval 416–479; that stretch reads QSMVGSVQRV…SNSLRGRIQL (64 aa). Residues 428 to 450 form a disordered region; the sequence is EGPSRRDPNELTGKSENMRPVNF.

The protein belongs to the methylthiotransferase family. MiaB subfamily. As to quaternary structure, monomer. Requires [4Fe-4S] cluster as cofactor.

It is found in the cytoplasm. The enzyme catalyses N(6)-dimethylallyladenosine(37) in tRNA + (sulfur carrier)-SH + AH2 + 2 S-adenosyl-L-methionine = 2-methylsulfanyl-N(6)-dimethylallyladenosine(37) in tRNA + (sulfur carrier)-H + 5'-deoxyadenosine + L-methionine + A + S-adenosyl-L-homocysteine + 2 H(+). In terms of biological role, catalyzes the methylthiolation of N6-(dimethylallyl)adenosine (i(6)A), leading to the formation of 2-methylthio-N6-(dimethylallyl)adenosine (ms(2)i(6)A) at position 37 in tRNAs that read codons beginning with uridine. In Xanthomonas oryzae pv. oryzae (strain PXO99A), this protein is tRNA-2-methylthio-N(6)-dimethylallyladenosine synthase.